The following is a 204-amino-acid chain: MPKPSSSSSSDSPSLTTAKPAGSEVAKKVLPAKATQTVDVSASTSSLSGSKSTTRRSAATGRTSASRATAATPASRGGKSAAGSSGSGSASGGAIKPPASSSVPSFVQGIALGMIETRGMVPAIEAADAMTKAAEVNLISREYVGGGYVTVMVRGETGAVNAAVRAGADACERVGDGLVAAHIIARPHQEVEPALRPTHAKRRS.

Composition is skewed to low complexity over residues 1 to 14 (MPKP…DSPS), 41 to 84 (SAST…AAGS), and 92 to 102 (GGAIKPPASSS). The segment at 1 to 102 (MPKPSSSSSS…GAIKPPASSS (102 aa)) is disordered. The 86-residue stretch at 111–196 (ALGMIETRGM…PHQEVEPALR (86 aa)) folds into the BMC domain.

The protein belongs to the bacterial microcompartments protein family. Homohexamer.

It is found in the carboxysome. In terms of biological role, a probable carboxysomal shell protein found only in Prochlorococcus and Synechococcus strains that grow in low light. This chain is Probable carboxysome shell protein CsoS1E, found in Prochlorococcus marinus (strain MIT 9313).